The primary structure comprises 571 residues: Glutamate--tRNA ligase (571 aa).

A 'HIGH' region motif is present at residues 110–120 (PNPNGPGTLGS).

It belongs to the class-I aminoacyl-tRNA synthetase family. Glutamate--tRNA ligase type 2 subfamily.

It is found in the cytoplasm. It carries out the reaction tRNA(Glu) + L-glutamate + ATP = L-glutamyl-tRNA(Glu) + AMP + diphosphate. Its function is as follows. Catalyzes the attachment of glutamate to tRNA(Glu) in a two-step reaction: glutamate is first activated by ATP to form Glu-AMP and then transferred to the acceptor end of tRNA(Glu). This chain is Glutamate--tRNA ligase, found in Methanosarcina acetivorans (strain ATCC 35395 / DSM 2834 / JCM 12185 / C2A).